The sequence spans 264 residues: Thymidylate synthase (264 aa).

R21 contacts dUMP. A (6R)-5,10-methylene-5,6,7,8-tetrahydrofolate-binding site is contributed by H51. R126–R127 serves as a coordination point for dUMP. Residue C146 is the Nucleophile of the active site. DUMP is bound by residues R166–D169, N177, and H207–Y209. D169 serves as a coordination point for (6R)-5,10-methylene-5,6,7,8-tetrahydrofolate. A (6R)-5,10-methylene-5,6,7,8-tetrahydrofolate-binding site is contributed by A263.

The protein belongs to the thymidylate synthase family. Bacterial-type ThyA subfamily. As to quaternary structure, homodimer.

It localises to the cytoplasm. The catalysed reaction is dUMP + (6R)-5,10-methylene-5,6,7,8-tetrahydrofolate = 7,8-dihydrofolate + dTMP. The protein operates within pyrimidine metabolism; dTTP biosynthesis. Catalyzes the reductive methylation of 2'-deoxyuridine-5'-monophosphate (dUMP) to 2'-deoxythymidine-5'-monophosphate (dTMP) while utilizing 5,10-methylenetetrahydrofolate (mTHF) as the methyl donor and reductant in the reaction, yielding dihydrofolate (DHF) as a by-product. This enzymatic reaction provides an intracellular de novo source of dTMP, an essential precursor for DNA biosynthesis. This Brucella ovis (strain ATCC 25840 / 63/290 / NCTC 10512) protein is Thymidylate synthase.